The following is a 231-amino-acid chain: Flagellar L-ring protein 2 (231 aa).

A signal peptide spans 1 to 15; it reads MKNLILILPLLMLTG. Residue Cys-16 is the site of N-palmitoyl cysteine attachment. Cys-16 carries the S-diacylglycerol cysteine lipid modification. The segment at 30 to 54 is disordered; the sequence is SPVGSGLRTQADPIPVTPRMRTPVS.

The protein belongs to the FlgH family. In terms of assembly, the basal body constitutes a major portion of the flagellar organelle and consists of four rings (L,P,S, and M) mounted on a central rod.

The protein resides in the cell outer membrane. The protein localises to the bacterial flagellum basal body. Assembles around the rod to form the L-ring and probably protects the motor/basal body from shearing forces during rotation. This is Flagellar L-ring protein 2 from Bradyrhizobium diazoefficiens (strain JCM 10833 / BCRC 13528 / IAM 13628 / NBRC 14792 / USDA 110).